Reading from the N-terminus, the 56-residue chain is Large ribosomal subunit protein bL33 (56 aa).

It belongs to the bacterial ribosomal protein bL33 family.

The sequence is that of Large ribosomal subunit protein bL33 from Treponema denticola (strain ATCC 35405 / DSM 14222 / CIP 103919 / JCM 8153 / KCTC 15104).